A 233-amino-acid polypeptide reads, in one-letter code: Leucyl/phenylalanyl-tRNA--protein transferase (233 aa).

This sequence belongs to the L/F-transferase family.

It localises to the cytoplasm. The catalysed reaction is N-terminal L-lysyl-[protein] + L-leucyl-tRNA(Leu) = N-terminal L-leucyl-L-lysyl-[protein] + tRNA(Leu) + H(+). It carries out the reaction N-terminal L-arginyl-[protein] + L-leucyl-tRNA(Leu) = N-terminal L-leucyl-L-arginyl-[protein] + tRNA(Leu) + H(+). The enzyme catalyses L-phenylalanyl-tRNA(Phe) + an N-terminal L-alpha-aminoacyl-[protein] = an N-terminal L-phenylalanyl-L-alpha-aminoacyl-[protein] + tRNA(Phe). Functions in the N-end rule pathway of protein degradation where it conjugates Leu, Phe and, less efficiently, Met from aminoacyl-tRNAs to the N-termini of proteins containing an N-terminal arginine or lysine. This Desulfatibacillum aliphaticivorans protein is Leucyl/phenylalanyl-tRNA--protein transferase.